Consider the following 331-residue polypeptide: Ferredoxin--NADP reductase (331 aa).

FAD contacts are provided by E38, Q46, Y51, A91, L125, D282, and S323.

The protein belongs to the ferredoxin--NADP reductase type 2 family. Homodimer. FAD serves as cofactor.

It catalyses the reaction 2 reduced [2Fe-2S]-[ferredoxin] + NADP(+) + H(+) = 2 oxidized [2Fe-2S]-[ferredoxin] + NADPH. The protein is Ferredoxin--NADP reductase of Deinococcus geothermalis (strain DSM 11300 / CIP 105573 / AG-3a).